We begin with the raw amino-acid sequence, 148 residues long: Large ribosomal subunit protein bL9 (148 aa).

It belongs to the bacterial ribosomal protein bL9 family.

Its function is as follows. Binds to the 23S rRNA. This is Large ribosomal subunit protein bL9 from Thermus thermophilus (strain ATCC BAA-163 / DSM 7039 / HB27).